The primary structure comprises 793 residues: DNA mismatch repair protein MutS (793 aa).

589–596 is an ATP binding site; sequence GPNMSGKS.

It belongs to the DNA mismatch repair MutS family.

Its function is as follows. This protein is involved in the repair of mismatches in DNA. It is possible that it carries out the mismatch recognition step. This protein has a weak ATPase activity. This is DNA mismatch repair protein MutS from Thermotoga petrophila (strain ATCC BAA-488 / DSM 13995 / JCM 10881 / RKU-1).